We begin with the raw amino-acid sequence, 175 residues long: Endoribonuclease YbeY (175 aa).

Positions 129, 133, and 139 each coordinate Zn(2+).

Belongs to the endoribonuclease YbeY family. The cofactor is Zn(2+).

The protein localises to the cytoplasm. Single strand-specific metallo-endoribonuclease involved in late-stage 70S ribosome quality control and in maturation of the 3' terminus of the 16S rRNA. This chain is Endoribonuclease YbeY, found in Lactobacillus johnsonii (strain CNCM I-12250 / La1 / NCC 533).